A 316-amino-acid chain; its full sequence is MSKQFGKVGVLYGGRSAEREVSLMSGKGVHEALLSAGVDAHLFDTGERSLADLAAAGFERVFIALHGRYGEDGTLQGALELLGIPYTGSGPLASSLSMDKIMTKRVWLQHGLPTPAFEVLGGSTELRLVPDRLGLPLILKPPHEGSTVGITKVAGYSDMKAAYELAARFDAEVLAEQFITGRELTVAVLGSGAAARALPVIEIVAPGGNYDYEHKYFSDDTQYFCPADLPADVAADVAAVAERAYAALGCEGWGRVDFILDRENRPWLLEMNTSPGMTGHSLVPMAARAVGMSYADLCVAILAKAACKVRSPARQD.

Residues 104–303 (KRVWLQHGLP…YADLCVAILA (200 aa)) enclose the ATP-grasp domain. Residue 130-185 (PDRLGLPLILKPPHEGSTVGITKVAGYSDMKAAYELAARFDAEVLAEQFITGRELT) coordinates ATP. Residues Asp-257, Glu-270, and Asn-272 each coordinate Mg(2+).

The protein belongs to the D-alanine--D-alanine ligase family. It depends on Mg(2+) as a cofactor. Mn(2+) serves as cofactor.

Its subcellular location is the cytoplasm. It catalyses the reaction 2 D-alanine + ATP = D-alanyl-D-alanine + ADP + phosphate + H(+). It participates in cell wall biogenesis; peptidoglycan biosynthesis. Cell wall formation. The polypeptide is D-alanine--D-alanine ligase (Bordetella parapertussis (strain 12822 / ATCC BAA-587 / NCTC 13253)).